Reading from the N-terminus, the 36-residue chain is Pancreatic polypeptide (36 aa).

A Tyrosine amide modification is found at Tyr-36.

This sequence belongs to the NPY family.

It is found in the secreted. Its function is as follows. Hormone secreted by pancreatic cells that acts as a regulator of pancreatic and gastrointestinal functions. In Larus argentatus (Herring gull), this protein is Pancreatic polypeptide (PPY).